Here is a 376-residue protein sequence, read N- to C-terminus: Succinyl-diaminopimelate desuccinylase (376 aa).

Histidine 66 serves as a coordination point for Zn(2+). Aspartate 68 is a catalytic residue. Residue aspartate 99 coordinates Zn(2+). Residue glutamate 133 is the Proton acceptor of the active site. Zn(2+)-binding residues include glutamate 134, glutamate 162, and histidine 349.

Belongs to the peptidase M20A family. DapE subfamily. In terms of assembly, homodimer. Zn(2+) serves as cofactor. The cofactor is Co(2+).

It catalyses the reaction N-succinyl-(2S,6S)-2,6-diaminopimelate + H2O = (2S,6S)-2,6-diaminopimelate + succinate. Its pathway is amino-acid biosynthesis; L-lysine biosynthesis via DAP pathway; LL-2,6-diaminopimelate from (S)-tetrahydrodipicolinate (succinylase route): step 3/3. Catalyzes the hydrolysis of N-succinyl-L,L-diaminopimelic acid (SDAP), forming succinate and LL-2,6-diaminopimelate (DAP), an intermediate involved in the bacterial biosynthesis of lysine and meso-diaminopimelic acid, an essential component of bacterial cell walls. The polypeptide is Succinyl-diaminopimelate desuccinylase (Ruthia magnifica subsp. Calyptogena magnifica).